Reading from the N-terminus, the 320-residue chain is tRNA U34 carboxymethyltransferase (320 aa).

Carboxy-S-adenosyl-L-methionine is bound by residues Lys87, Trp101, Lys106, Gly126, 148 to 150 (EPS), 176 to 177 (VE), Met192, Tyr196, and Arg311.

This sequence belongs to the class I-like SAM-binding methyltransferase superfamily. CmoB family. As to quaternary structure, homotetramer.

It carries out the reaction carboxy-S-adenosyl-L-methionine + 5-hydroxyuridine(34) in tRNA = 5-carboxymethoxyuridine(34) in tRNA + S-adenosyl-L-homocysteine + H(+). Functionally, catalyzes carboxymethyl transfer from carboxy-S-adenosyl-L-methionine (Cx-SAM) to 5-hydroxyuridine (ho5U) to form 5-carboxymethoxyuridine (cmo5U) at position 34 in tRNAs. This Desulfotalea psychrophila (strain LSv54 / DSM 12343) protein is tRNA U34 carboxymethyltransferase.